We begin with the raw amino-acid sequence, 209 residues long: Putative NAD(P)H nitroreductase YdgI (209 aa).

FMN-binding positions include 14 to 16 (RRS), 72 to 74 (QTQ), 161 to 162 (GG), and Arg-199.

Belongs to the nitroreductase family. FMN is required as a cofactor.

This is Putative NAD(P)H nitroreductase YdgI (ydgI) from Bacillus subtilis (strain 168).